The sequence spans 72 residues: DNA-directed RNA polymerase subunit epsilon (72 aa).

The protein belongs to the RNA polymerase subunit epsilon family. RNAP is composed of a core of 2 alpha, a beta and a beta' subunit. The core is associated with a delta subunit, and at least one of epsilon or omega. When a sigma factor is associated with the core the holoenzyme is formed, which can initiate transcription.

The catalysed reaction is RNA(n) + a ribonucleoside 5'-triphosphate = RNA(n+1) + diphosphate. Its function is as follows. A non-essential component of RNA polymerase (RNAP). The chain is DNA-directed RNA polymerase subunit epsilon from Staphylococcus aureus (strain JH1).